The chain runs to 127 residues: Small ribosomal subunit protein uS11 (127 aa).

Belongs to the universal ribosomal protein uS11 family. In terms of assembly, part of the 30S ribosomal subunit.

In terms of biological role, located on the platform of the 30S subunit. The protein is Small ribosomal subunit protein uS11 of Halobacterium salinarum (strain ATCC 700922 / JCM 11081 / NRC-1) (Halobacterium halobium).